The following is a 451-amino-acid chain: Probable V-type proton ATPase subunit H 1 (451 aa).

It belongs to the V-ATPase H subunit family. In terms of assembly, V-ATPase is a heteromultimeric enzyme made up of two complexes: the ATP-hydrolytic V1 complex and the proton translocation V0 complex. The V1 complex consists of three catalytic AB heterodimers that form a heterohexamer, three peripheral stalks each consisting of EG heterodimers, one central rotor including subunits D and F, and the regulatory subunits C and H. The proton translocation complex V0 consists of the proton transport subunit a, a ring of proteolipid subunits c9c'', rotary subunit d, subunits e and f, and the accessory subunits vah-19/Ac45 and vah-20/PRR.

Subunit of the V1 complex of vacuolar(H+)-ATPase (V-ATPase), a multisubunit enzyme composed of a peripheral complex (V1) that hydrolyzes ATP and a membrane integral complex (V0) that translocates protons. V-ATPase is responsible for acidifying and maintaining the pH of intracellular compartments and in some cell types, is targeted to the plasma membrane, where it is responsible for acidifying the extracellular environment. Subunit H is essential for V-ATPase activity, but not for the assembly of the complex. The sequence is that of Probable V-type proton ATPase subunit H 1 from Caenorhabditis elegans.